A 329-amino-acid polypeptide reads, in one-letter code: Phenylalanine--tRNA ligase alpha subunit (329 aa).

Glu-254 provides a ligand contact to Mg(2+).

Belongs to the class-II aminoacyl-tRNA synthetase family. Phe-tRNA synthetase alpha subunit type 1 subfamily. In terms of assembly, tetramer of two alpha and two beta subunits. Mg(2+) is required as a cofactor.

The protein localises to the cytoplasm. The enzyme catalyses tRNA(Phe) + L-phenylalanine + ATP = L-phenylalanyl-tRNA(Phe) + AMP + diphosphate + H(+). In Haemophilus influenzae (strain ATCC 51907 / DSM 11121 / KW20 / Rd), this protein is Phenylalanine--tRNA ligase alpha subunit (pheS).